We begin with the raw amino-acid sequence, 453 residues long: MSLQLNGKSRGTSPGNAQPLPIFDALCRSLPVGTADEQFWWKLTGRHLARMMLEAGYPEHRQVECLVFHRFKVVPTFGPQPRSAEPWYRSRVAASAGDGAPISYSWRFGTADRKPYIRNYIEPLGPLTGTAADPNNDVATRAFLQDLTTTLPNLDLSLFWTFEPHLVSRFSDKADREKYAGPSVLTGVELSPDSDAIDIKMYLYPRNPEQISQLLSTIIPKAMRDAYGEDVCLDSLNIVKDFLTNHPDGRQLKPRGTTGIDCCKVQDSRVKFYVATDNTSFDHIATVMTIGGRRPLSTEVLDKLRELWYELNGLPSDFPTSEQVPTGQGQELPAGHHGVGFYYDIQPRLALPDVKAFINVRKHAKSDLAAAETVISFLERHGQGHHNPRAYLNVLRDIVPAEELETRVGAQAFYSVAVKKEELDITAYFIPQVYRRFASVQVELNGQRRSRFE.

The dimethylallyl diphosphate site is built by R118, K200, Y202, K271, Y273, and Y428.

The protein belongs to the tryptophan dimethylallyltransferase family.

It functions in the pathway secondary metabolite biosynthesis. Prenyltransferase; part of the gene cluster that mediates the biosynthesis of neosartoricin, a prenylated anthracenone that exhibits T-cell antiproliferative activity, suggestive of a physiological role as an immunosuppressive agent. The non-reducing polyketide synthase nscA probably synthesizes and cyclizes the decaketide backbone. The hydrolase nscB then mediates the product release through hydrolysis followed by spontaneous decarboxylation. The prenyltransferase nscD catalyzes the addition of the dimethylallyl group to the aromatic C5. The FAD-dependent monooxygenase nscC is then responsible for the stereospecific hydroxylation at C2. There is no gene encoding O-acetyltransferase in the nsc gene cluster; thus, the last step of 2-O-acetylation leading to neosartoricin may be catalyzed by an unidentified O-acetyltransferase. This chain is Prenyltransferase nscD, found in Aspergillus fumigatus (strain ATCC MYA-4609 / CBS 101355 / FGSC A1100 / Af293) (Neosartorya fumigata).